The primary structure comprises 599 residues: Putative clathrin assembly protein At1g03050 (599 aa).

In terms of domain architecture, ENTH spans 26-162 (GRSASLSELD…DFRMQARHGK (137 aa)). 2 disordered regions span residues 332–382 (KQSK…PEEE) and 580–599 (QGHM…TPQY). 2 stretches are compositionally biased toward acidic residues: residues 341 to 359 (ADED…EQED) and 373 to 382 (EEDDVKPEEE). Polar residues predominate over residues 585–599 (LRQNQNQPYSYTPQY).

It is found in the membrane. The protein resides in the clathrin-coated pit. The protein localises to the golgi apparatus. Its subcellular location is the cytoplasmic vesicle. It localises to the clathrin-coated vesicle. The polypeptide is Putative clathrin assembly protein At1g03050 (Arabidopsis thaliana (Mouse-ear cress)).